Reading from the N-terminus, the 326-residue chain is MSCAEVMYHPQPYGASQYLPNPMAATTCPTAYYQPAPQPGQQKKLAVFSKMQDSLEVTLPSKQEEEDEEEEEEEKDQPAEMEYLNSRCVLFTYFQGDIGSVVDEHFSRALGQAITLHPESAISKSKMGLTPLWRDSSALSSQRNSFPTSFWTSSYQPPPAPCLGGVHPDFQVTGPPGTFSAADPSPWPGHNLHQTGPAPPPAVSESWPYPLTSQVSPSYSHMHDVYMRHHHPHAHMHHRHRHHHHHHHPPAGSALDPSYGPLLMPSVHAARIPAPQCDITKTEPTTVTSATSAWAGAFHGTVDIVPSVGFDTGLQHQDKSKESPWY.

The disordered stretch occupies residues 57 to 80 (VTLPSKQEEEDEEEEEEEKDQPAE). Lys-62 participates in a covalent cross-link: Glycyl lysine isopeptide (Lys-Gly) (interchain with G-Cter in SUMO2). Positions 64–75 (EEEDEEEEEEEK) are enriched in acidic residues. Lys-126 is covalently cross-linked (Glycyl lysine isopeptide (Lys-Gly) (interchain with G-Cter in SUMO2)). Disordered regions lie at residues 175-203 (PPGT…PPAV) and 233-256 (HAHM…SALD). Basic residues predominate over residues 233 to 249 (HAHMHHRHRHHHHHHHP).

Belongs to the vestigial family. In terms of tissue distribution, enriched in placenta.

The protein resides in the nucleus. May act as a specific coactivator for the mammalian TEFs. The chain is Transcription cofactor vestigial-like protein 3 (VGLL3) from Homo sapiens (Human).